The following is a 471-amino-acid chain: Citrate synthase, mitochondrial (471 aa).

Catalysis depends on residues His309, His355, and Asp409.

It belongs to the citrate synthase family. As to quaternary structure, homodimer. Ubiquitous.

It is found in the mitochondrion matrix. The enzyme catalyses oxaloacetate + acetyl-CoA + H2O = citrate + CoA + H(+). Its pathway is carbohydrate metabolism; tricarboxylic acid cycle; isocitrate from oxaloacetate: step 1/2. This chain is Citrate synthase, mitochondrial, found in Solanum tuberosum (Potato).